We begin with the raw amino-acid sequence, 201 residues long: Peptide deformylase (201 aa).

Fe cation is bound by residues Cys92 and His134. The active site involves Glu135. His138 is a Fe cation binding site.

Belongs to the polypeptide deformylase family. Requires Fe(2+) as cofactor.

It carries out the reaction N-terminal N-formyl-L-methionyl-[peptide] + H2O = N-terminal L-methionyl-[peptide] + formate. Functionally, removes the formyl group from the N-terminal Met of newly synthesized proteins. Requires at least a dipeptide for an efficient rate of reaction. N-terminal L-methionine is a prerequisite for activity but the enzyme has broad specificity at other positions. The polypeptide is Peptide deformylase (Rhodopirellula baltica (strain DSM 10527 / NCIMB 13988 / SH1)).